The following is a 314-amino-acid chain: Zinc transporter ZIP3 (314 aa).

The Extracellular segment spans residues 1–3 (MVK). The chain crosses the membrane as a helical span at residues 4–24 (LLVAKILCMVGMFFFMLLGSL). Residues 25 to 42 (LPVKIIEMDFEKAHRSKK) are Cytoplasmic-facing. A helical transmembrane segment spans residues 43 to 63 (ILSLCNTFGGGVFLATCFNAL). At 64 to 85 (LPAVREKLKEVLTLAHISTDYP) the chain is on the extracellular side. Residues 86 to 106 (LAETIMLLGFFMTVFLEQLVL) traverse the membrane as a helical segment. Residues 107 to 169 (TFRKERPAFI…QELSRSSPLR (63 aa)) are Cytoplasmic-facing. Phosphoserine is present on residues serine 125 and serine 129. The chain crosses the membrane as a helical span at residues 170–190 (LLSLVFALSAHSVFEGLALGL). The Extracellular segment spans residues 191–196 (QEEGEK). A helical membrane pass occupies residues 197–217 (VVSLFVGVAIHETLVAVALGI). Residues 218–229 (NMARSAMALRDA) are Cytoplasmic-facing. A helical transmembrane segment spans residues 230–250 (AKLAVTVSAMIPLGISLGLGI). The Extracellular portion of the chain corresponds to 251-262 (DSAQGMPSSVAS). A helical membrane pass occupies residues 263 to 283 (VLLQGLAGGTFLFVTFFEILA). The Cytoplasmic segment spans residues 284–292 (KELEEKSDR). Residues 293–313 (LLKVLFLVLGYTVLAGMVFIK) traverse the membrane as a helical segment. Position 314 (tryptophan 314) is a topological domain, extracellular.

Belongs to the ZIP transporter (TC 2.A.5) family.

It localises to the cell membrane. The protein resides in the apical cell membrane. It carries out the reaction Zn(2+)(in) = Zn(2+)(out). Transporter for the divalent cation Zn(2+). Mediates the influx of Zn(2+) into cells from extracellular space. Controls Zn(2+) accumulation into dentate gyrus granule cells in the hippocampus. Mediates Zn(2+) reuptake from the secreted milk within the alveolar lumen. This is Zinc transporter ZIP3 (SLC39A3) from Bos taurus (Bovine).